Consider the following 153-residue polypeptide: UPF0235 protein C15orf40 (153 aa).

A compositionally biased stretch (basic residues) spans 1–12 (MLRLRSGLRHLR). The disordered stretch occupies residues 1-55 (MLRLRSGLRHLRATPNTRGSARLLCAEMPKKAGATTKGKSQSKEPERPLPPLGPV). S116 is modified (phosphoserine).

The protein belongs to the UPF0235 family.

This chain is UPF0235 protein C15orf40 (C15orf40), found in Homo sapiens (Human).